We begin with the raw amino-acid sequence, 224 residues long: MYGTGNNAVTPDQAAASRADSLFAHAEGSISEDAILASARERSEEIGARAVTPAVGALLSLLTKLSGGKAVAEVGTGAGVSGLWLLSGMSYDGVLTTIDIEPEYLRLAKQAFSEAGIGPSRTRLISGRGQDVLTRLADESYDLVFIDADPIDQPAYVVEGVRLLRSCGIIVVHRAALGGRAGDPAARDAEVTAVREAARLIAENERLTPALVPLGDGLLAAVRE.

S-adenosyl-L-methionine-binding positions include valine 51, glutamate 73, 75–76, serine 81, aspartate 99, and isoleucine 100; that span reads GT. Aspartate 147 contacts substrate. Position 149 (aspartate 149) interacts with S-adenosyl-L-methionine.

The protein belongs to the class I-like SAM-binding methyltransferase superfamily. Cation-dependent O-methyltransferase family.

In Mycobacterium leprae (strain Br4923), this protein is Putative O-methyltransferase MLBr01075.